A 183-amino-acid polypeptide reads, in one-letter code: UPF0098 protein YbcL (183 aa).

Positions 1-21 (MKTLIVSTVLAFITFSAQAAA) are cleaved as a signal peptide. Cysteines 46 and 129 form a disulfide.

The protein belongs to the UPF0098 family. Homodimer.

The protein resides in the periplasm. The protein is UPF0098 protein YbcL (ybcL) of Escherichia coli (strain K12).